The sequence spans 276 residues: Undecaprenyl-diphosphatase 2 (276 aa).

7 helical membrane passes run 3–23 (IWDI…EYAP), 48–68 (AANT…AFVF), 92–112 (LSIA…FLFE), 119–139 (LFSV…MLAA), 196–216 (ADFT…LSLI), 225–245 (DLLP…LFVV), and 255–275 (IKLV…FILF).

It belongs to the UppP family.

It is found in the cell membrane. It catalyses the reaction di-trans,octa-cis-undecaprenyl diphosphate + H2O = di-trans,octa-cis-undecaprenyl phosphate + phosphate + H(+). Catalyzes the dephosphorylation of undecaprenyl diphosphate (UPP). Confers resistance to bacitracin. This is Undecaprenyl-diphosphatase 2 from Bacillus licheniformis (strain ATCC 14580 / DSM 13 / JCM 2505 / CCUG 7422 / NBRC 12200 / NCIMB 9375 / NCTC 10341 / NRRL NRS-1264 / Gibson 46).